The primary structure comprises 840 residues: Homeobox-leucine zipper protein HOX9 (840 aa).

Disordered stretches follow at residues 1–26 (MAAA…AGMD) and 135–160 (NPSL…DASN). Gly residues predominate over residues 12 to 21 (GSDGGGGGYD). Positions 26–89 (DSGKYVRYTP…NRRCRDKQRK (64 aa)) form a DNA-binding region, homeobox. The stretch at 86 to 135 (KQRKEASRLQAVNRKLTAMNKLLMEENERLQKQVSQLVHENAYMKQQLQN) forms a coiled coil. Positions 157-385 (DASNPSGLLT…IAQETSGEVV (229 aa)) constitute an START domain.

It belongs to the HD-ZIP homeobox family. Class III subfamily. In terms of tissue distribution, expressed in seedlings, roots, stems, leaf sheaths and blades and panicles.

Its subcellular location is the nucleus. Functionally, probable transcription factor. This chain is Homeobox-leucine zipper protein HOX9 (HOX9), found in Oryza sativa subsp. japonica (Rice).